The sequence spans 218 residues: Adenylate kinase (218 aa).

10–15 (GAGKGT) serves as a coordination point for ATP. Positions 30–59 (STGDMLRAAVKAGTPLGLEAKKVMDAGGLV) are NMP. Residues T31, R36, 57–59 (GLV), 85–88 (GFPR), and Q92 each bind AMP. The LID stretch occupies residues 122 to 159 (GRRVHPASGRSYHVRFNPPKAEGVDDVTGEPLVQRDDD). Residues R123 and 132-133 (SY) each bind ATP. The AMP site is built by R156 and R167. Residue G203 coordinates ATP.

It belongs to the adenylate kinase family. Monomer.

Its subcellular location is the cytoplasm. It carries out the reaction AMP + ATP = 2 ADP. The protein operates within purine metabolism; AMP biosynthesis via salvage pathway; AMP from ADP: step 1/1. Functionally, catalyzes the reversible transfer of the terminal phosphate group between ATP and AMP. Plays an important role in cellular energy homeostasis and in adenine nucleotide metabolism. This is Adenylate kinase from Bordetella bronchiseptica (strain ATCC BAA-588 / NCTC 13252 / RB50) (Alcaligenes bronchisepticus).